Consider the following 451-residue polypeptide: 3-phosphoshikimate 1-carboxyvinyltransferase (451 aa).

The 3-phosphoshikimate site is built by lysine 38, serine 39, and arginine 43. Residue lysine 38 participates in phosphoenolpyruvate binding. The phosphoenolpyruvate site is built by glycine 111 and arginine 140. Residues serine 185, glutamine 187, aspartate 335, and lysine 362 each coordinate 3-phosphoshikimate. Glutamine 187 lines the phosphoenolpyruvate pocket. The active-site Proton acceptor is aspartate 335. Phosphoenolpyruvate-binding residues include arginine 366 and arginine 408.

This sequence belongs to the EPSP synthase family. As to quaternary structure, monomer.

The protein resides in the cytoplasm. The catalysed reaction is 3-phosphoshikimate + phosphoenolpyruvate = 5-O-(1-carboxyvinyl)-3-phosphoshikimate + phosphate. The protein operates within metabolic intermediate biosynthesis; chorismate biosynthesis; chorismate from D-erythrose 4-phosphate and phosphoenolpyruvate: step 6/7. Its function is as follows. Catalyzes the transfer of the enolpyruvyl moiety of phosphoenolpyruvate (PEP) to the 5-hydroxyl of shikimate-3-phosphate (S3P) to produce enolpyruvyl shikimate-3-phosphate and inorganic phosphate. This chain is 3-phosphoshikimate 1-carboxyvinyltransferase, found in Crocosphaera subtropica (strain ATCC 51142 / BH68) (Cyanothece sp. (strain ATCC 51142)).